The chain runs to 347 residues: Holliday junction branch migration complex subunit RuvB (347 aa).

A large ATPase domain (RuvB-L) region spans residues 1 to 181 (MTRNSLLNPE…FGIPVRLQFY (181 aa)). Residues L20, R21, G62, K65, T66, T67, R171, Y181, and R218 each coordinate ATP. T66 is a Mg(2+) binding site. The segment at 182–252 (SIEELRQVIT…IADEALNRLE (71 aa)) is small ATPAse domain (RuvB-S). Positions 255–347 (KLGLDLMDRR…SEIKNQPGLL (93 aa)) are head domain (RuvB-H). 3 residues coordinate DNA: R291, R310, and R315.

It belongs to the RuvB family. Homohexamer. Forms an RuvA(8)-RuvB(12)-Holliday junction (HJ) complex. HJ DNA is sandwiched between 2 RuvA tetramers; dsDNA enters through RuvA and exits via RuvB. An RuvB hexamer assembles on each DNA strand where it exits the tetramer. Each RuvB hexamer is contacted by two RuvA subunits (via domain III) on 2 adjacent RuvB subunits; this complex drives branch migration. In the full resolvosome a probable DNA-RuvA(4)-RuvB(12)-RuvC(2) complex forms which resolves the HJ.

It is found in the cytoplasm. It catalyses the reaction ATP + H2O = ADP + phosphate + H(+). In terms of biological role, the RuvA-RuvB-RuvC complex processes Holliday junction (HJ) DNA during genetic recombination and DNA repair, while the RuvA-RuvB complex plays an important role in the rescue of blocked DNA replication forks via replication fork reversal (RFR). RuvA specifically binds to HJ cruciform DNA, conferring on it an open structure. The RuvB hexamer acts as an ATP-dependent pump, pulling dsDNA into and through the RuvAB complex. RuvB forms 2 homohexamers on either side of HJ DNA bound by 1 or 2 RuvA tetramers; 4 subunits per hexamer contact DNA at a time. Coordinated motions by a converter formed by DNA-disengaged RuvB subunits stimulates ATP hydrolysis and nucleotide exchange. Immobilization of the converter enables RuvB to convert the ATP-contained energy into a lever motion, pulling 2 nucleotides of DNA out of the RuvA tetramer per ATP hydrolyzed, thus driving DNA branch migration. The RuvB motors rotate together with the DNA substrate, which together with the progressing nucleotide cycle form the mechanistic basis for DNA recombination by continuous HJ branch migration. Branch migration allows RuvC to scan DNA until it finds its consensus sequence, where it cleaves and resolves cruciform DNA. This is Holliday junction branch migration complex subunit RuvB from Zymomonas mobilis subsp. mobilis (strain ATCC 31821 / ZM4 / CP4).